The following is a 160-amino-acid chain: 2-C-methyl-D-erythritol 2,4-cyclodiphosphate synthase (160 aa).

2 residues coordinate a divalent metal cation: Asp-11 and His-13. 4-CDP-2-C-methyl-D-erythritol 2-phosphate contacts are provided by residues 11–13 and 37–38; these read DVH and HS. His-45 serves as a coordination point for a divalent metal cation. 4-CDP-2-C-methyl-D-erythritol 2-phosphate-binding positions include 59 to 61 and Arg-145; that span reads DIG.

Belongs to the IspF family. Homotrimer. The cofactor is a divalent metal cation.

The catalysed reaction is 4-CDP-2-C-methyl-D-erythritol 2-phosphate = 2-C-methyl-D-erythritol 2,4-cyclic diphosphate + CMP. Its pathway is isoprenoid biosynthesis; isopentenyl diphosphate biosynthesis via DXP pathway; isopentenyl diphosphate from 1-deoxy-D-xylulose 5-phosphate: step 4/6. Its function is as follows. Involved in the biosynthesis of isopentenyl diphosphate (IPP) and dimethylallyl diphosphate (DMAPP), two major building blocks of isoprenoid compounds. Catalyzes the conversion of 4-diphosphocytidyl-2-C-methyl-D-erythritol 2-phosphate (CDP-ME2P) to 2-C-methyl-D-erythritol 2,4-cyclodiphosphate (ME-CPP) with a corresponding release of cytidine 5-monophosphate (CMP). This is 2-C-methyl-D-erythritol 2,4-cyclodiphosphate synthase from Neisseria meningitidis serogroup A / serotype 4A (strain DSM 15465 / Z2491).